An 859-amino-acid polypeptide reads, in one-letter code: DNA mismatch repair protein MutS (859 aa).

Residue 617 to 624 coordinates ATP; that stretch reads GPNMGGKS.

This sequence belongs to the DNA mismatch repair MutS family.

Functionally, this protein is involved in the repair of mismatches in DNA. It is possible that it carries out the mismatch recognition step. This protein has a weak ATPase activity. The sequence is that of DNA mismatch repair protein MutS from Stutzerimonas stutzeri (strain A1501) (Pseudomonas stutzeri).